Reading from the N-terminus, the 223-residue chain is Ribonuclease 3 (223 aa).

The region spanning 3 to 125 (LERLQKKLSY…IIAAIYLDAG (123 aa)) is the RNase III domain. Glu38 is a binding site for Mg(2+). Residue Asp42 is part of the active site. Residues Asp111 and Glu114 each contribute to the Mg(2+) site. Residue Glu114 is part of the active site. The region spanning 152–222 (DPKTRLQEFL…AEQVLAKLTT (71 aa)) is the DRBM domain.

This sequence belongs to the ribonuclease III family. Homodimer. Mg(2+) serves as cofactor.

It is found in the cytoplasm. The enzyme catalyses Endonucleolytic cleavage to 5'-phosphomonoester.. In terms of biological role, digests double-stranded RNA. Involved in the processing of primary rRNA transcript to yield the immediate precursors to the large and small rRNAs (23S and 16S). Processes some mRNAs, and tRNAs when they are encoded in the rRNA operon. Processes pre-crRNA and tracrRNA of type II CRISPR loci if present in the organism. The chain is Ribonuclease 3 from Actinobacillus pleuropneumoniae serotype 5b (strain L20).